Here is a 204-residue protein sequence, read N- to C-terminus: FMN-dependent NADH:quinone oxidoreductase (204 aa).

Residues Ser-9, 15 to 17, 95 to 98, and 139 to 142 contribute to the FMN site; these read SVS, MYNF, and SRGG.

The protein belongs to the azoreductase type 1 family. As to quaternary structure, homodimer. FMN is required as a cofactor.

It catalyses the reaction 2 a quinone + NADH + H(+) = 2 a 1,4-benzosemiquinone + NAD(+). It carries out the reaction N,N-dimethyl-1,4-phenylenediamine + anthranilate + 2 NAD(+) = 2-(4-dimethylaminophenyl)diazenylbenzoate + 2 NADH + 2 H(+). In terms of biological role, quinone reductase that provides resistance to thiol-specific stress caused by electrophilic quinones. Its function is as follows. Also exhibits azoreductase activity. Catalyzes the reductive cleavage of the azo bond in aromatic azo compounds to the corresponding amines. In Methylocella silvestris (strain DSM 15510 / CIP 108128 / LMG 27833 / NCIMB 13906 / BL2), this protein is FMN-dependent NADH:quinone oxidoreductase.